The following is a 2471-amino-acid chain: Polyprotein P1234 (2471 aa).

The region spanning 28 to 257 (EATQVTDNDH…EERILLRSWH (230 aa)) is the Alphavirus-like MT domain. The interval 242-261 (GSTIYTEERILLRSWHLPNV) is nsP1 membrane-binding. Residue cysteine 417 is the site of S-palmitoyl cysteine; by host attachment. In terms of domain architecture, (+)RNA virus helicase ATP-binding spans 688–839 (DLVDPPFHEF…HEICTEVYHK (152 aa)). 719-726 (GVPGSGKS) lines the a ribonucleoside 5'-triphosphate pocket. One can recognise a (+)RNA virus helicase C-terminal domain in the interval 840–988 (SISRRCTRTV…LEEWQAEHDA (149 aa)). The 320-residue stretch at 1001-1320 (DVYQNKVHVC…VVLNNIYQGS (320 aa)) folds into the Peptidase C9 domain. A nucleolus localization signal region spans residues 1002 to 1021 (VYQNKVHVCWAKALEPVLAT). Catalysis depends on cysteine 1010, which acts as the For cysteine protease nsP2 activity. The Nuclear export signal signature appears at 1054-1063 (TRFFGVDIDS). Histidine 1079 (for cysteine protease nsP2 activity) is an active-site residue. The Nuclear localization signal signature appears at 1177–1181 (PGKRV). The 159-residue stretch at 1328-1486 (APAYRVIRGD…RIKDAIARKE (159 aa)) folds into the Macro domain. Aspartate 1337, asparagine 1351, glycine 1359, glycine 1438, valine 1439, and tyrosine 1440 together coordinate ADP-D-ribose. Zn(2+) contacts are provided by cysteine 1589, cysteine 1591, cysteine 1614, and cysteine 1632. Positions 1669–1692 (RRPAPPVPVPARIPSPRCSPAVSM) are disordered. The segment covering 1670–1681 (RPAPPVPVPARI) has biased composition (pro residues). The tract at residues 1771-1783 (LITFDSVTDIFEN) is binding to host G3BP family members. Positions 1798–1838 (IPAPRRRREPETDIQRFDKSEEKPVPKPRTRTAKYKKPPGV) are disordered. Basic and acidic residues predominate over residues 1805–1822 (REPETDIQRFDKSEEKPV). The span at 1823–1834 (PKPRTRTAKYKK) shows a compositional bias: basic residues. The segment at 1835–1851 (PPGVARSISEAELDEFI) is binding to host FXR family members. The 116-residue stretch at 2228–2343 (DAVLETDIAS…KGVKSDALMA (116 aa)) folds into the RdRp catalytic domain.

In terms of assembly, interacts with non-structural protein 3. Interacts with RNA-directed RNA polymerase nsP4. Interacts with protease nsP2. interacts with itself. Interacts with mRNA-capping enzyme nsP1. Interacts with host DDX1. Interacts with host DDX3. Interacts (via C-terminus) with host FXR1; this interaction inhibits the formation of host stress granules on viral mRNAs and the nsp3-FXR1 complexes bind viral RNAs and probably orchestrate the assembly of viral replication complexes. Interacts (via C-terminus) with host FXR2; this interaction inhibits the formation of host stress granules on viral mRNAs and the nsp3-FXR2 complexes bind viral RNAs and probably orchestrate the assembly of viral replication complexes. Interacts (via C-terminus) with host FMR1; this interaction inhibits the formation of host stress granules on viral mRNAs and the nsp3-FMR1 complexes bind viral RNAs and probably orchestrate the assembly of viral replication complexes. Interacts (via C-terminus) with host G3BP1; this interaction inhibits the formation of host stress granules on viral mRNAs and the nsp3-G3BP1 complexes bind viral RNAs and probably orchestrate the assembly of viral replication complexes. Interacts (via C-terminus) with host G3BP2; this interaction inhibits the formation of host stress granules on viral mRNAs and the nsp3-G3BP2 complexes bind viral RNAs and probably orchestrate the assembly of viral replication complexes. As to quaternary structure, interacts with mRNA-capping enzyme nsP1. Interacts with protease nsP2. interacts with itself. In terms of assembly, interacts with RNA-directed RNA polymerase nsP4. Interacts with mRNA-capping enzyme nsP1. Interacts with KPNA1/karyopherin-alpha1; this interaction probably allows the active transport of protease nsP2 into the host nucleus. Mg(2+) is required as a cofactor. It depends on Mn(2+) as a cofactor. Post-translationally, specific enzymatic cleavages in vivo yield mature proteins. The processing of the polyprotein is temporally regulated. In early stages (1.7 hpi), P1234 is first cleaved in trans through its nsP2 protease activity, releasing P123' and nsP4, which associate to form the early replication complex. At the same time, P1234 is also cut at the nsP1/nsP2 site early in infection but with lower efficiency. After replication of the viral minus-strand RNAs (4 hpi), the polyproteins are cut at the nsP1/nsP2 and nsP2/nsP3 sites very efficiently, preventing accumulation of P123' and P1234 and allowing the formation of the late replication complex. NsP3'/nsP4 site is not cleaved anymore and P34 is produced rather than nsP4. Specific enzymatic cleavages in vivo yield mature proteins. The processing of the polyprotein is temporally regulated. In early stages (1.7 hpi), P123 is cleaved at the nsP1/nsP2 site with low efficiency. After replication of the viral minus-strand RNAs (4 hpi), the polyproteins are cut at the nsP1/nsP2 and nsP2/nsP3 sites very efficiently, preventing accumulation of P123 and allowing the formation of the late replication complex. In terms of processing, specific enzymatic cleavages in vivo yield mature proteins. The processing of the polyprotein is temporally regulated. In early stages (1.7 hpi), P123' is cleaved at the nsP1/nsP2 site with low efficiency. After replication of the viral minus-strand RNAs (4 hpi), the polyproteins are cut at the nsP1/nsP2 and nsP2/nsP3 sites very efficiently, preventing accumulation of P123' and allowing the formation of the late replication complex. Post-translationally, palmitoylated by host palmitoyltransferases ZDHHC2 and ZDHHC19. Phosphorylated by host on serines and threonines. In terms of processing, ubiquitinated; targets the protein for rapid degradation via the ubiquitin system. Nsp4 is present in extremely low quantities due to low frequency of translation through the amber stop-codon and the degradation by the ubiquitin pathway.

It localises to the host cytoplasmic vesicle membrane. The protein resides in the host cell membrane. It is found in the host cell projection. The protein localises to the host filopodium. Its subcellular location is the host nucleus. It localises to the host cytoplasm. The enzyme catalyses GTP + S-adenosyl-L-methionine = N(7)-methyl-GTP + S-adenosyl-L-homocysteine. It catalyses the reaction N(7)-methyl-GTP + L-histidyl-[protein] = N(tele)-(N(7)-methylguanosine 5'-phospho)-L-histidyl-[protein] + diphosphate. The catalysed reaction is N(tele)-(N(7)-methylguanosine 5'-phospho)-L-histidyl-[protein] + a 5'-end diphospho-(purine-ribonucleoside) in mRNA + H(+) = a 5'-end (N(7)-methyl 5'-triphosphoguanosine)-(purine-ribonucleoside) in mRNA + L-histidyl-[protein]. It carries out the reaction a 5'-end triphospho-ribonucleoside in mRNA + H2O = a 5'-end diphospho-ribonucleoside in mRNA + phosphate + H(+). The enzyme catalyses a ribonucleoside 5'-triphosphate + H2O = a ribonucleoside 5'-diphosphate + phosphate + H(+). It catalyses the reaction ATP + H2O = ADP + phosphate + H(+). The catalysed reaction is RNA(n) + a ribonucleoside 5'-triphosphate = RNA(n+1) + diphosphate. It carries out the reaction 4-O-(ADP-D-ribosyl)-L-aspartyl-[protein] + H2O = L-aspartyl-[protein] + ADP-D-ribose + H(+). The enzyme catalyses 5-O-(ADP-D-ribosyl)-L-glutamyl-[protein] + H2O = L-glutamyl-[protein] + ADP-D-ribose + H(+). It catalyses the reaction RNA(n) + ATP = RNA(n)-3'-adenine ribonucleotide + diphosphate. The catalysed reaction is ADP-alpha-D-ribose 1''-phosphate + H2O = ADP-D-ribose + phosphate. Inhibited by sinefungin. Functionally, inactive precursor of the viral replicase, which is activated by cleavages carried out by the viral protease nsP2. The early replication complex formed by the polyprotein P123 and nsP4 synthesizes the minus-strand RNAs (antigenome). Polyprotein P123 is a short-lived polyprotein that accumulates during early stage of infection. As soon P123 is cleaved into mature proteins, the plus-strand RNAs synthesis begins. In terms of biological role, the early replication complex formed by the polyprotein P123' and nsP4 synthesizes minus-strand RNAs (antigenome). Polyprotein P123' is a short-lived polyprotein that accumulates during early stage of infection. As soon P123' is cleaved into mature proteins, the plus-strand RNAs synthesis begins. Its function is as follows. Cytoplasmic capping enzyme that catalyzes two virus-specific reactions: methyltransferase and nsP1 guanylyltransferase. mRNA-capping is necessary since all viral RNAs are synthesized in the cytoplasm, and host capping enzymes are restricted to the nucleus. The enzymatic reaction involves a covalent link between 7-methyl-GMP and nsP1, whereas eukaryotic capping enzymes form a covalent complex only with GMP. NsP1 capping consists in the following reactions: GTP is first methylated into 7-methyl-GMP and then is covalently linked to nsP1 to form the m7GMp-nsP1 complex from which 7-methyl-GMP complex is transferred to the mRNA to create the cap structure. NsP1 is also needed for the initiation of the minus-strand RNAs synthesis. Probably serves as a membrane anchor for the replication complex composed of nsP1-nsP4. Nsp1 is needed for the initiation of the minus-strand RNAs synthesis. Palmitoylated nsP1 is remodeling host cell cytoskeleton, and induces filopodium-like structure formation at the surface of the host cell. Functionally, multifunctional protein whose N-terminus is part of the RNA polymerase complex and displays NTPase, RNA triphosphatase and helicase activities. NTPase and RNA triphosphatase are involved in viral RNA capping and helicase keeps a check on the dsRNA replication intermediates. The C-terminus harbors a protease that specifically cleaves the polyproteins and releases the mature proteins. Required for the shutoff of minus-strand RNAs synthesis. Inhibits host translation to ensure maximal viral gene expression and evade host immune response. Seems to be essential for minus-strand RNAs and subgenomic 26S mRNAs synthesis. Displays mono-ADP-ribosylhydrolase activity. ADP-ribosylation is a post-translational modification that controls various processes of the host cell and the virus probably needs to revert it for optimal viral replication. Binds proteins of FXR and G3BP families and sequesters them into the viral RNA replication complexes thereby inhibiting the formation of host stress granules on viral mRNAs. The nsp3-FXR and nsp3-G3BP complexes bind viral RNAs and probably orchestrate the assembly of viral replication complexes, thanks to the ability of G3BP and FXR family members to self-assemble and bind DNA. In terms of biological role, seems to be essential for minus-strand RNAs and subgenomic 26S mRNAs synthesis. Displays mono-ADP-ribosylhydrolase activity. ADP-ribosylation is a post-translational modification that controls various processes of the host cell and the virus probably needs to revert it for optimal viral replication. Binds proteins of FXR and G3BP families and sequesters them into the viral RNA replication complexes thereby inhibiting the formation of host stress granules on viral mRNAs. The nsp3'-FXR and nsp3-G3BP complexes bind viral RNAs and probably orchestrate the assembly of viral replication complexes, thanks to the ability of G3BP and FXR family members to self-assemble and bind DNA. Its function is as follows. RNA dependent RNA polymerase. Replicates genomic and antigenomic RNA by recognizing replications specific signals. The early replication complex formed by the polyprotein P123 and nsP4 synthesizes minus-strand RNAs. The late replication complex composed of fully processed nsP1-nsP4 is responsible for the production of genomic and subgenomic plus-strand RNAs. This Eastern equine encephalitis virus (strain PE-0.0155) (EEEV) protein is Polyprotein P1234.